The chain runs to 182 residues: Large ribosomal subunit protein uL6 (182 aa).

The protein belongs to the universal ribosomal protein uL6 family. Part of the 50S ribosomal subunit.

Its function is as follows. This protein binds to the 23S rRNA, and is important in its secondary structure. It is located near the subunit interface in the base of the L7/L12 stalk, and near the tRNA binding site of the peptidyltransferase center. This is Large ribosomal subunit protein uL6 from Dehalococcoides mccartyi (strain ATCC BAA-2100 / JCM 16839 / KCTC 5957 / BAV1).